The chain runs to 405 residues: Glucose-1-phosphate adenylyltransferase (405 aa).

Alpha-D-glucose 1-phosphate-binding positions include tyrosine 99, glycine 164, 179 to 180 (EK), and serine 197.

Belongs to the bacterial/plant glucose-1-phosphate adenylyltransferase family. Homotetramer.

The enzyme catalyses alpha-D-glucose 1-phosphate + ATP + H(+) = ADP-alpha-D-glucose + diphosphate. Its pathway is glycan biosynthesis; glycogen biosynthesis. Involved in the biosynthesis of ADP-glucose, a building block required for the elongation reactions to produce glycogen. Catalyzes the reaction between ATP and alpha-D-glucose 1-phosphate (G1P) to produce pyrophosphate and ADP-Glc. This is Glucose-1-phosphate adenylyltransferase from Corynebacterium aurimucosum (strain ATCC 700975 / DSM 44827 / CIP 107346 / CN-1) (Corynebacterium nigricans).